Consider the following 500-residue polypeptide: Polyamine oxidase 1 (500 aa).

A signal peptide spans 1–28 (MSSSPSFGLLAVAALLLALSLAQHGSLA). FAD contacts are provided by residues 42–43 (MS), Glu63, Arg71, and 87–88 (NW). Residue Glu90 participates in substrate binding. Asn105 carries an N-linked (GlcNAc...) asparagine glycan. Glu198 provides a ligand contact to substrate. 3 residues coordinate FAD: Val265, Tyr427, and Glu458. Position 466 (Gly466) interacts with substrate. An FAD-binding site is contributed by 467 to 468 (YV). Residues Cys485 and Cys491 are joined by a disulfide bond.

The protein belongs to the flavin monoamine oxidase family. As to quaternary structure, monomer. FAD is required as a cofactor.

The protein localises to the secreted. It is found in the extracellular space. It localises to the apoplast. The protein resides in the cell wall. It carries out the reaction spermidine + O2 + H2O = 4-aminobutanal + propane-1,3-diamine + H2O2. It catalyses the reaction N(8)-acetylspermidine + O2 + H2O = 4-acetamidobutanal + propane-1,3-diamine + H2O2. The catalysed reaction is spermine + O2 + H2O = N-(3-aminopropyl)-4-aminobutanal + propane-1,3-diamine + H2O2. The enzyme catalyses N(1)-acetylspermine + O2 + H2O = N-(3-acetamidopropyl)-4-aminobutanal + propane-1,3-diamine + H2O2. It participates in amine and polyamine degradation; spermine degradation. In terms of biological role, flavoenzyme involved in polyamine back-conversion. Catalyzes the oxidation of the secondary amino group of polyamines, such as spermine, spermidine and their acetyl derivatives. Plays an important role in the regulation of polyamine intracellular concentration. The polypeptide is Polyamine oxidase 1 (Zea mays (Maize)).